A 293-amino-acid polypeptide reads, in one-letter code: Diaminopimelate epimerase (293 aa).

Substrate contacts are provided by Asn-17, Gln-47, and Asn-67. Cys-76 serves as the catalytic Proton donor. Substrate-binding positions include 77 to 78 (GN), Asn-164, Asn-197, and 215 to 216 (ER). Cys-224 acts as the Proton acceptor in catalysis. 225–226 (GS) lines the substrate pocket.

Belongs to the diaminopimelate epimerase family. In terms of assembly, homodimer.

It localises to the cytoplasm. The enzyme catalyses (2S,6S)-2,6-diaminopimelate = meso-2,6-diaminopimelate. Its pathway is amino-acid biosynthesis; L-lysine biosynthesis via DAP pathway; DL-2,6-diaminopimelate from LL-2,6-diaminopimelate: step 1/1. Catalyzes the stereoinversion of LL-2,6-diaminopimelate (L,L-DAP) to meso-diaminopimelate (meso-DAP), a precursor of L-lysine and an essential component of the bacterial peptidoglycan. The polypeptide is Diaminopimelate epimerase (Rhodopseudomonas palustris (strain BisB5)).